Here is a 99-residue protein sequence, read N- to C-terminus: Small ribosomal subunit protein bS20 (99 aa).

Belongs to the bacterial ribosomal protein bS20 family.

Its function is as follows. Binds directly to 16S ribosomal RNA. The polypeptide is Small ribosomal subunit protein bS20 (Prochlorococcus marinus (strain SARG / CCMP1375 / SS120)).